Consider the following 474-residue polypeptide: 3-isopropylmalate dehydratase large subunit (474 aa).

Positions 355, 415, and 418 each coordinate [4Fe-4S] cluster.

It belongs to the aconitase/IPM isomerase family. LeuC type 1 subfamily. In terms of assembly, heterodimer of LeuC and LeuD. [4Fe-4S] cluster is required as a cofactor.

The enzyme catalyses (2R,3S)-3-isopropylmalate = (2S)-2-isopropylmalate. Its pathway is amino-acid biosynthesis; L-leucine biosynthesis; L-leucine from 3-methyl-2-oxobutanoate: step 2/4. In terms of biological role, catalyzes the isomerization between 2-isopropylmalate and 3-isopropylmalate, via the formation of 2-isopropylmaleate. The protein is 3-isopropylmalate dehydratase large subunit of Shewanella sp. (strain MR-4).